The sequence spans 476 residues: 1-aminocyclopropane-1-carboxylate synthase 4 (476 aa).

Lys282 is modified (N6-(pyridoxal phosphate)lysine).

This sequence belongs to the class-I pyridoxal-phosphate-dependent aminotransferase family. Homodimer. Pyridoxal 5'-phosphate serves as cofactor.

The enzyme catalyses S-adenosyl-L-methionine = 1-aminocyclopropane-1-carboxylate + S-methyl-5'-thioadenosine + H(+). It functions in the pathway alkene biosynthesis; ethylene biosynthesis via S-adenosyl-L-methionine; ethylene from S-adenosyl-L-methionine: step 1/2. Functionally, catalyzes the formation of 1-aminocyclopropane-1-carboxylate, a direct precursor of ethylene in higher plants. The sequence is that of 1-aminocyclopropane-1-carboxylate synthase 4 (ACS4) from Solanum lycopersicum (Tomato).